The sequence spans 93 residues: HssA/B-like protein 26 (93 aa).

The protein belongs to the hssA/B family.

The protein is HssA/B-like protein 26 (hssl26) of Dictyostelium discoideum (Social amoeba).